A 62-amino-acid chain; its full sequence is uncharacterized protein (62 aa).

The helical transmembrane segment at 37 to 57 (FILGVILLGVIIESITLLVVY) threads the bilayer.

Its subcellular location is the membrane. This is an uncharacterized protein from Dictyostelium discoideum (Social amoeba).